We begin with the raw amino-acid sequence, 442 residues long: D-serine dehydratase (442 aa).

Residue K118 is modified to N6-(pyridoxal phosphate)lysine.

Belongs to the serine/threonine dehydratase family. DsdA subfamily. In terms of assembly, monomer. It depends on pyridoxal 5'-phosphate as a cofactor.

The catalysed reaction is D-serine = pyruvate + NH4(+). The polypeptide is D-serine dehydratase (Escherichia coli O81 (strain ED1a)).